The chain runs to 916 residues: Dual serine/threonine and tyrosine protein kinase (916 aa).

Basic and acidic residues predominate over residues 1–19 (MQRDGTRSARRMDEGDRRT). A disordered region spans residues 1-27 (MQRDGTRSARRMDEGDRRTGSAGRSGS). Positions 641–895 (PRIGRELGRG…PLMGIVQPML (255 aa)) constitute a Protein kinase domain. ATP contacts are provided by residues 647 to 655 (LGRGQYGVV) and lysine 670. Residue aspartate 766 is the Proton acceptor of the active site.

The protein belongs to the protein kinase superfamily. Ser/Thr protein kinase family.

It localises to the cytoplasm. Its subcellular location is the cell membrane. The protein localises to the apical cell membrane. It is found in the basolateral cell membrane. The protein resides in the cell junction. The enzyme catalyses L-seryl-[protein] + ATP = O-phospho-L-seryl-[protein] + ADP + H(+). The catalysed reaction is L-threonyl-[protein] + ATP = O-phospho-L-threonyl-[protein] + ADP + H(+). It carries out the reaction L-tyrosyl-[protein] + ATP = O-phospho-L-tyrosyl-[protein] + ADP + H(+). In terms of biological role, may act as a positive regulator of ERK phosphorylation downstream of fibroblast growth factor-receptor activation. May induce both caspase-dependent apoptosis and caspase-independent cell death. May play a role in the embryonic development. This is Dual serine/threonine and tyrosine protein kinase (dstyk) from Xenopus laevis (African clawed frog).